A 231-amino-acid polypeptide reads, in one-letter code: ABC transporter ATP-binding protein YtrE (231 aa).

Residues 4–231 (VQHIDHSFTI…VLKGGITVEV (228 aa)) form the ABC transporter domain. 42–49 (GRSGSGKS) is a binding site for ATP.

It belongs to the ABC transporter superfamily. In terms of assembly, the complex is composed of 2 ATP-binding proteins (YtrB and YtrE), 2 transmembrane proteins (YtrC and YtrD) and a solute-binding protein (YtrF).

The protein localises to the cell membrane. Its function is as follows. Part of the ABC transporter complex YtrBCDEF that plays a role in acetoin utilization during stationary phase and sporulation. This Bacillus subtilis (strain 168) protein is ABC transporter ATP-binding protein YtrE (ytrE).